Here is a 454-residue protein sequence, read N- to C-terminus: MSHNDTIVAQATPPGRGGVGILRISGLKARDVAQEVLGKLPKPRYADYLPFKDVDGSALDQGIALWFPGPNSFTGEDVLELQGHGGPVILDLLLKRILTLPGVRIARPGEFSERAFLNDKLDLAQAEAIADLIDASSEQAARSALNSLQGAFSARVNHLVEALTHLRIYVEAAIDFPDEEIDFLSDGKIEAQLNGVIADLDAVRTEARQGSLLREGMKVVIAGRPNAGKSSLLNALAGREAAIVTDIAGTTRDVLREHIHIDGMPLHIIDTAGLRDASDEVERIGIERAWQEIEQADRVLFMVDGTTTDAVDPADIWPDFIARLPKNLPITVVRNKADITGETLGISEVNGHSLVRLSARTGEGVDVLRNHLKQSMGFDINMEGGFLARRRHLQALAEAAEHLEQGKAQLLGAWAGELLAEELRLAQQSLSEITGEFTSDDLLGRIFSSFCIGK.

Positions 23, 80, and 120 each coordinate (6S)-5-formyl-5,6,7,8-tetrahydrofolate. A TrmE-type G domain is found at 216–377 (GMKVVIAGRP…LRNHLKQSMG (162 aa)). Residue Asn-226 participates in K(+) binding. Residues 226 to 231 (NAGKSS), 245 to 251 (TDIAGTT), 270 to 273 (DTAG), 335 to 338 (NKAD), and 358 to 360 (SAR) contribute to the GTP site. Ser-230 is a Mg(2+) binding site. K(+) contacts are provided by Thr-245, Ile-247, and Thr-250. Thr-251 is a Mg(2+) binding site. Lys-454 contacts (6S)-5-formyl-5,6,7,8-tetrahydrofolate.

This sequence belongs to the TRAFAC class TrmE-Era-EngA-EngB-Septin-like GTPase superfamily. TrmE GTPase family. In terms of assembly, homodimer. Heterotetramer of two MnmE and two MnmG subunits. K(+) serves as cofactor.

The protein localises to the cytoplasm. Its function is as follows. Exhibits a very high intrinsic GTPase hydrolysis rate. Involved in the addition of a carboxymethylaminomethyl (cmnm) group at the wobble position (U34) of certain tRNAs, forming tRNA-cmnm(5)s(2)U34. The sequence is that of tRNA modification GTPase MnmE from Salmonella paratyphi C (strain RKS4594).